The primary structure comprises 141 residues: Nucleoside diphosphate kinase (141 aa).

6 residues coordinate ATP: K11, F59, R87, T93, R104, and N114. H117 serves as the catalytic Pros-phosphohistidine intermediate.

It belongs to the NDK family. As to quaternary structure, homotetramer. It depends on Mg(2+) as a cofactor.

The protein localises to the cytoplasm. It carries out the reaction a 2'-deoxyribonucleoside 5'-diphosphate + ATP = a 2'-deoxyribonucleoside 5'-triphosphate + ADP. It catalyses the reaction a ribonucleoside 5'-diphosphate + ATP = a ribonucleoside 5'-triphosphate + ADP. Its function is as follows. Major role in the synthesis of nucleoside triphosphates other than ATP. The ATP gamma phosphate is transferred to the NDP beta phosphate via a ping-pong mechanism, using a phosphorylated active-site intermediate. This Nitrosospira multiformis (strain ATCC 25196 / NCIMB 11849 / C 71) protein is Nucleoside diphosphate kinase.